The sequence spans 359 residues: Tropomodulin-1 (359 aa).

Positions glutamate 36–proline 61 are disordered. The segment at proline 39–histidine 138 is tropomyosin-binding.

Belongs to the tropomodulin family. As to quaternary structure, binds to the N-terminus of tropomyosin and to actin. Interacts with FLII.

The protein localises to the cytoplasm. It is found in the cytoskeleton. In terms of biological role, blocks the elongation and depolymerization of the actin filaments at the pointed end. The Tmod/TM complex contributes to the formation of the short actin protofilament, which in turn defines the geometry of the membrane skeleton. This is Tropomodulin-1 (Tmod1) from Rattus norvegicus (Rat).